Consider the following 191-residue polypeptide: Protein Ves (191 aa).

The protein belongs to the Ves family.

In Escherichia coli (strain K12 / MC4100 / BW2952), this protein is Protein Ves.